The following is a 248-amino-acid chain: Ribosomal RNA small subunit methyltransferase J (248 aa).

S-adenosyl-L-methionine is bound by residues 101-102 (RD), 117-118 (ER), 153-154 (SS), and aspartate 171.

The protein belongs to the methyltransferase superfamily. RsmJ family.

The protein localises to the cytoplasm. The enzyme catalyses guanosine(1516) in 16S rRNA + S-adenosyl-L-methionine = N(2)-methylguanosine(1516) in 16S rRNA + S-adenosyl-L-homocysteine + H(+). Functionally, specifically methylates the guanosine in position 1516 of 16S rRNA. The sequence is that of Ribosomal RNA small subunit methyltransferase J from Proteus mirabilis (strain HI4320).